Here is a 276-residue protein sequence, read N- to C-terminus: Exosome complex component RRP43 (276 aa).

The residue at position 2 (A2) is an N-acetylalanine.

This sequence belongs to the RNase PH family. As to quaternary structure, component of the RNA exosome core complex (Exo-9), composed of EXOSC1, EXOSC2, EXOSC3, EXOSC4, EXOSC5, EXOSC6, EXOSC7, EXOSC8 and EXOSC9; within the complex interacts with EXOSC5 and EXOSC6. The catalytically inactive RNA exosome core complex (Exo-9) associates with the catalytic subunit EXOSC10/RRP6. Exo-9 may associate with DIS3 to form the nucleolar exosome complex, or DIS3L to form the cytoplasmic exosome complex. Exo-9 is formed by a hexameric base ring consisting of the heterodimers EXOSC4-EXOSC9, EXOSC5-EXOSC8 and EXOSC6-EXOSC7, and a cap ring consisting of EXOSC1, EXOSC2 and EXOSC3. The RNA exosome complex associates with cofactors C1D/RRP47, MPHOSPH6/MPP6 and MTREX/MTR4. Binds outer membrane protein opap from Neisseria gonorrhoeae.

The protein localises to the cytoplasm. It localises to the nucleus. It is found in the nucleolus. Non-catalytic component of the RNA exosome complex which has 3'-&gt;5' exoribonuclease activity and participates in a multitude of cellular RNA processing and degradation events. In the nucleus, the RNA exosome complex is involved in proper maturation of stable RNA species such as rRNA, snRNA and snoRNA, in the elimination of RNA processing by-products and non-coding 'pervasive' transcripts, such as antisense RNA species and promoter-upstream transcripts (PROMPTs), and of mRNAs with processing defects, thereby limiting or excluding their export to the cytoplasm. The RNA exosome may be involved in Ig class switch recombination (CSR) and/or Ig variable region somatic hypermutation (SHM) by targeting AICDA deamination activity to transcribed dsDNA substrates. In the cytoplasm, the RNA exosome complex is involved in general mRNA turnover and specifically degrades inherently unstable mRNAs containing AU-rich elements (AREs) within their 3' untranslated regions, and in RNA surveillance pathways, preventing translation of aberrant mRNAs. It seems to be involved in degradation of histone mRNA. The catalytic inactive RNA exosome core complex of 9 subunits (Exo-9) is proposed to play a pivotal role in the binding and presentation of RNA for ribonucleolysis, and to serve as a scaffold for the association with catalytic subunits and accessory proteins or complexes. EXOSC8 binds to ARE-containing RNAs. This Homo sapiens (Human) protein is Exosome complex component RRP43 (EXOSC8).